The chain runs to 339 residues: UDP-N-acetylenolpyruvoylglucosamine reductase (339 aa).

One can recognise an FAD-binding PCMH-type domain in the interval 19–189 (VDVQARLFAE…LRVRFKLSRV (171 aa)). Arg-166 is an active-site residue. The active-site Proton donor is Ser-239. Glu-335 is an active-site residue.

The protein belongs to the MurB family. FAD is required as a cofactor.

The protein resides in the cytoplasm. The catalysed reaction is UDP-N-acetyl-alpha-D-muramate + NADP(+) = UDP-N-acetyl-3-O-(1-carboxyvinyl)-alpha-D-glucosamine + NADPH + H(+). The protein operates within cell wall biogenesis; peptidoglycan biosynthesis. In terms of biological role, cell wall formation. The chain is UDP-N-acetylenolpyruvoylglucosamine reductase from Pseudomonas syringae pv. syringae (strain B728a).